The chain runs to 137 residues: Small ribosomal subunit protein uS12 (137 aa).

The disordered stretch occupies residues 1–20; sequence MPTTNQLVNRGRTSKVQKQN. Asp-102 carries the 3-methylthioaspartic acid modification.

This sequence belongs to the universal ribosomal protein uS12 family. Part of the 30S ribosomal subunit. Contacts proteins S8 and S17. May interact with IF1 in the 30S initiation complex.

In terms of biological role, with S4 and S5 plays an important role in translational accuracy. Functionally, interacts with and stabilizes bases of the 16S rRNA that are involved in tRNA selection in the A site and with the mRNA backbone. Located at the interface of the 30S and 50S subunits, it traverses the body of the 30S subunit contacting proteins on the other side and probably holding the rRNA structure together. The combined cluster of proteins S8, S12 and S17 appears to hold together the shoulder and platform of the 30S subunit. The polypeptide is Small ribosomal subunit protein uS12 (Mycoplasmopsis synoviae (strain 53) (Mycoplasma synoviae)).